We begin with the raw amino-acid sequence, 622 residues long: Cytochrome c oxidase subunit 1 (622 aa).

At 1-27 (MLNALTEKRTRGSMLWDYLTTVDHKKI) the chain is on the extracellular side. The helical transmembrane segment at 28 to 46 (AILYLVAGGFFFLVGGIEA) threads the bilayer. The Cytoplasmic portion of the chain corresponds to 47–68 (MFIRIQLAKPENAFLSAQAYNE). Residues 69 to 88 (VMTMHGTTMIFLAAMPLLFA) form a helical membrane-spanning segment. H73 lines the Fe(II)-heme a pocket. The Extracellular portion of the chain corresponds to 89–110 (LMNAVVPLQIGARDVSFPFLNA). A helical transmembrane segment spans residues 111–128 (LGFWLFFFGGIFLNLSWF). The Cytoplasmic segment spans residues 129 to 159 (LGGAPDAGWTSYASLSLHSKGHGIDFFVLGL). Residues 160–178 (QISGLGTLIAGINFLATII) traverse the membrane as a helical segment. Topologically, residues 179 to 196 (NMRAPGMTYMRLPLFTWT) are extracellular. The chain crosses the membrane as a helical span at residues 197–215 (TFVASALILFAFPPLTVGL). Residues 216–241 (ALMMLDRLFGTNFFNPELGGNTVIWE) are Cytoplasmic-facing. Residues 242 to 261 (HLFWIFGHPEVYILILPAFG) form a helical membrane-spanning segment. Residues H249 and Y253 each contribute to the Cu cation site. The 1'-histidyl-3'-tyrosine (His-Tyr) cross-link spans 249–253 (HPEVY). The Extracellular portion of the chain corresponds to 262–284 (IFSEVIPVFARKRLFGYSSMVFA). A helical transmembrane segment spans residues 285 to 304 (IVLIGFLGFMVWVHHMFTTG). Positions 298 and 299 each coordinate Cu cation. The Cytoplasmic segment spans residues 305 to 312 (LGPIANAI). A helical membrane pass occupies residues 313-331 (FAVATMAIAIPTGIKIFNW). At 332 to 346 (LLTIWGGNVKYTTAM) the chain is on the extracellular side. A helical transmembrane segment spans residues 347-366 (LYAVSFIPSFVLGGVTGVML). Over 367-374 (AAAAADYQ) the chain is Cytoplasmic. Residues 375 to 394 (FHDTYFVVAHFHYVIIGGVV) traverse the membrane as a helical segment. A heme a3-binding site is contributed by H384. Residue H386 coordinates Fe(II)-heme a. Over 395–421 (FGLLAGVHFWWPKMFGKILHETMGKIS) the chain is Extracellular. Residues 422 to 441 (FVLFFIGFHLTFFIQHFVGL) form a helical membrane-spanning segment. At 442 to 459 (MGMPRRVYTFLPGQGLET) the chain is on the cytoplasmic side. The chain crosses the membrane as a helical span at residues 460-479 (GNLISTIGAFFMAAAVILLL). Residues 480-552 (VNVIWTSVKG…EPVDDIHMPN (73 aa)) are Extracellular-facing. A helical membrane pass occupies residues 553 to 572 (GSILPLIISFGLFVAAFGLL). At 573–580 (YRSDYAWG) the chain is on the cytoplasmic side. Residues 581–604 (LPVIFIGLGITFITMLLRSVIDDH) form a helical membrane-spanning segment. Residues 605-622 (GYHIHKEELPNDDKGVKA) lie on the Cytoplasmic side of the membrane.

Belongs to the heme-copper respiratory oxidase family. Cu(2+) is required as a cofactor. The cofactor is heme.

It localises to the cell membrane. The catalysed reaction is 4 Fe(II)-[cytochrome c] + O2 + 8 H(+)(in) = 4 Fe(III)-[cytochrome c] + 2 H2O + 4 H(+)(out). It participates in energy metabolism; oxidative phosphorylation. Cytochrome c oxidase is the component of the respiratory chain that catalyzes the reduction of oxygen to water. Subunits 1-3 form the functional core of the enzyme complex. Co I is the catalytic subunit of the enzyme. Electrons originating in cytochrome c are transferred via the copper A center of subunit 2 and heme a of subunit 1 to the bimetallic center formed by heme a3 and copper B. This cytochrome c oxidase shows proton pump activity across the membrane in addition to the electron transfer. This chain is Cytochrome c oxidase subunit 1 (ctaD), found in Bacillus subtilis (strain 168).